Consider the following 456-residue polypeptide: tRNA modification GTPase MnmE (456 aa).

(6S)-5-formyl-5,6,7,8-tetrahydrofolate is bound by residues R24, E81, and K120. The TrmE-type G domain maps to 216 to 379; sequence GMTVVIAGRP…LRDHLKACMG (164 aa). Residue N226 participates in K(+) binding. Residues 226–231, 245–251, 270–273, and 335–338 each bind GTP; these read NAGKSS, TDIAGTT, DTAG, and NKAD. S230 lines the Mg(2+) pocket. Residues T245, I247, and T250 each coordinate K(+). T251 contacts Mg(2+). K456 contributes to the (6S)-5-formyl-5,6,7,8-tetrahydrofolate binding site.

The protein belongs to the TRAFAC class TrmE-Era-EngA-EngB-Septin-like GTPase superfamily. TrmE GTPase family. As to quaternary structure, homodimer. Heterotetramer of two MnmE and two MnmG subunits. The cofactor is K(+).

It localises to the cytoplasm. Its function is as follows. Exhibits a very high intrinsic GTPase hydrolysis rate. Involved in the addition of a carboxymethylaminomethyl (cmnm) group at the wobble position (U34) of certain tRNAs, forming tRNA-cmnm(5)s(2)U34. This chain is tRNA modification GTPase MnmE, found in Pseudomonas fluorescens (strain ATCC BAA-477 / NRRL B-23932 / Pf-5).